We begin with the raw amino-acid sequence, 209 residues long: Pyridoxine/pyridoxamine 5'-phosphate oxidase (209 aa).

Residues 7–10 (REDY) and K64 each bind substrate. FMN is bound by residues 59–64 (RIVLLK), 74–75 (FT), R80, and K81. 3 residues coordinate substrate: Y121, R125, and S129. FMN contacts are provided by residues 138 to 139 (QS) and W182. 188 to 190 (RLH) contributes to the substrate binding site. R192 is an FMN binding site.

This sequence belongs to the pyridoxamine 5'-phosphate oxidase family. Homodimer. The cofactor is FMN.

It carries out the reaction pyridoxamine 5'-phosphate + O2 + H2O = pyridoxal 5'-phosphate + H2O2 + NH4(+). The catalysed reaction is pyridoxine 5'-phosphate + O2 = pyridoxal 5'-phosphate + H2O2. It participates in cofactor metabolism; pyridoxal 5'-phosphate salvage; pyridoxal 5'-phosphate from pyridoxamine 5'-phosphate: step 1/1. It functions in the pathway cofactor metabolism; pyridoxal 5'-phosphate salvage; pyridoxal 5'-phosphate from pyridoxine 5'-phosphate: step 1/1. Its function is as follows. Catalyzes the oxidation of either pyridoxine 5'-phosphate (PNP) or pyridoxamine 5'-phosphate (PMP) into pyridoxal 5'-phosphate (PLP). This is Pyridoxine/pyridoxamine 5'-phosphate oxidase from Actinobacillus pleuropneumoniae serotype 3 (strain JL03).